The sequence spans 308 residues: UPF0282 protein PYRAB09800 (308 aa).

The protein belongs to the UPF0282 family.

The sequence is that of UPF0282 protein PYRAB09800 from Pyrococcus abyssi (strain GE5 / Orsay).